A 153-amino-acid chain; its full sequence is Catabolic 3-dehydroquinase (153 aa).

Tyrosine 24 acts as the Proton acceptor in catalysis. Substrate contacts are provided by asparagine 75, histidine 81, and aspartate 88. The active-site Proton donor is histidine 101. Substrate-binding positions include 102–103 and arginine 112; that span reads VS.

This sequence belongs to the type-II 3-dehydroquinase family. Homododecamer. Adopts a ring-like structure, composed of an arrangement of two hexameric rings stacked on top of one another.

The catalysed reaction is 3-dehydroquinate = 3-dehydroshikimate + H2O. The protein operates within aromatic compound metabolism; 3,4-dihydroxybenzoate biosynthesis; 3,4-dihydroxybenzoate from 3-dehydroquinate: step 1/2. Its function is as follows. Is involved in the catabolism of quinate. Allows the utilization of quinate as carbon source via the beta-ketoadipate pathway. This is Catabolic 3-dehydroquinase from Aspergillus oryzae (strain ATCC 42149 / RIB 40) (Yellow koji mold).